Reading from the N-terminus, the 555-residue chain is Potassium-transporting ATPase potassium-binding subunit (555 aa).

The next 10 membrane-spanning stretches (helical) occupy residues 2-22 (IWVAVVITMLLFILVAKPTGI), 60-80 (QYALSLVLLNGFMIVVVYFIF), 130-150 (IGITFLMFAAPATTLALVMAF), 173-193 (VFLPIAFVTALVFVALGVPQT), 246-266 (MSNILQMMLMMLLPTALPFTY), 278-298 (ILFVSLFMVFLLGFITITTSE), 374-394 (AGFVNIIMYAIIAVFISGLMV), 412-432 (LIAVTILFHPLLILGFSALAL), 483-503 (LVMFLGRYFSLVTMLAVAASL), and 525-545 (GIFIGTIVIVGALTFFPMLVL).

This sequence belongs to the KdpA family. As to quaternary structure, the system is composed of three essential subunits: KdpA, KdpB and KdpC.

Its subcellular location is the cell membrane. Functionally, part of the high-affinity ATP-driven potassium transport (or Kdp) system, which catalyzes the hydrolysis of ATP coupled with the electrogenic transport of potassium into the cytoplasm. This subunit binds the extracellular potassium ions and delivers the ions to the membrane domain of KdpB through an intramembrane tunnel. This is Potassium-transporting ATPase potassium-binding subunit from Bacillus cereus (strain AH820).